The chain runs to 267 residues: Hydroxyethylthiazole kinase (267 aa).

Met46 provides a ligand contact to substrate. 2 residues coordinate ATP: Arg122 and Ser168. Substrate is bound at residue Gly195.

Belongs to the Thz kinase family. It depends on Mg(2+) as a cofactor.

It carries out the reaction 5-(2-hydroxyethyl)-4-methylthiazole + ATP = 4-methyl-5-(2-phosphooxyethyl)-thiazole + ADP + H(+). It functions in the pathway cofactor biosynthesis; thiamine diphosphate biosynthesis; 4-methyl-5-(2-phosphoethyl)-thiazole from 5-(2-hydroxyethyl)-4-methylthiazole: step 1/1. In terms of biological role, catalyzes the phosphorylation of the hydroxyl group of 4-methyl-5-beta-hydroxyethylthiazole (THZ). The chain is Hydroxyethylthiazole kinase from Nitratidesulfovibrio vulgaris (strain DSM 19637 / Miyazaki F) (Desulfovibrio vulgaris).